The following is a 145-amino-acid chain: D-aminoacyl-tRNA deacylase (145 aa).

The short motif at 133–134 is the Gly-cisPro motif, important for rejection of L-amino acids element; it reads GP.

The protein belongs to the DTD family. In terms of assembly, homodimer.

It is found in the cytoplasm. The enzyme catalyses glycyl-tRNA(Ala) + H2O = tRNA(Ala) + glycine + H(+). It catalyses the reaction a D-aminoacyl-tRNA + H2O = a tRNA + a D-alpha-amino acid + H(+). Its function is as follows. An aminoacyl-tRNA editing enzyme that deacylates mischarged D-aminoacyl-tRNAs. Also deacylates mischarged glycyl-tRNA(Ala), protecting cells against glycine mischarging by AlaRS. Acts via tRNA-based rather than protein-based catalysis; rejects L-amino acids rather than detecting D-amino acids in the active site. By recycling D-aminoacyl-tRNA to D-amino acids and free tRNA molecules, this enzyme counteracts the toxicity associated with the formation of D-aminoacyl-tRNA entities in vivo and helps enforce protein L-homochirality. This Cutibacterium acnes (strain DSM 16379 / KPA171202) (Propionibacterium acnes) protein is D-aminoacyl-tRNA deacylase.